The primary structure comprises 266 residues: Zinc transporter ZupT (266 aa).

8 helical membrane-spanning segments follow: residues 8–28, 35–55, 70–90, 123–143, 152–172, 185–205, 209–229, and 246–266; these read LALT…ALMV, FLTF…FVEI, HAAG…IWLI, GIFT…AVFF, GVVI…AVAV, FSYS…GYAL, FLSP…MVYI, and IAIS…LMLA. Positions 134 and 137 each coordinate Fe(2+). Zn(2+)-binding residues include E137 and H162. Residues N163, E166, and E195 each coordinate Fe(2+). Position 166 (E166) interacts with Zn(2+).

Belongs to the ZIP transporter (TC 2.A.5) family. ZupT subfamily.

The protein resides in the cell inner membrane. It carries out the reaction Zn(2+)(in) = Zn(2+)(out). Functionally, mediates zinc uptake. May also transport other divalent cations. The chain is Zinc transporter ZupT from Chlorobium limicola (strain DSM 245 / NBRC 103803 / 6330).